The chain runs to 526 residues: Cytochrome P450 monooxygenase milC (526 aa).

The chain crosses the membrane as a helical span at residues alanine 2–alanine 20. Residue cysteine 470 coordinates heme.

The protein belongs to the cytochrome P450 family. Heme serves as cofactor.

It localises to the membrane. It catalyses the reaction cordypyrone A + reduced [NADPH--hemoprotein reductase] + O2 = cordypyrone B + oxidized [NADPH--hemoprotein reductase] + H2O + H(+). The protein operates within secondary metabolite biosynthesis. In terms of biological role, cytochrome P450 monooxygenase; part of the gene cluster that mediates the biosynthesis of cordypyrones A and B, 2 pyrones that show modest activities against pathogenic bacteria including methicillin-resistant Staphylococcus aureus (MRSA), Mycobacterium tuberculosis and Bacillus cereus. The HR-PKS milA catalyzes the formation of cordypyrones A via condensation of one acetate with 10 malonate units. Since milA lacks an enoyl reductase domain, the 2 beta-keto processing domains DH and KR of milA collaborate with the trans-enoyl reductase milB to catalyze the different levels of reduction. The cytochrome P450 monooxygenase milC then hydroxylates the C-22 of cordypyrones A to yield cordypyrones B. This is Cytochrome P450 monooxygenase milC from Cordyceps militaris (strain CM01) (Caterpillar fungus).